Reading from the N-terminus, the 128-residue chain is MDIPKDRFYTKTHEWALPEGDTVLVGITDYAQDALGDVVYVELPEVGRVVEKGEAVAVVESVKTASDIYAPVAGEIVEVNLALEKTPELVNQDPYGEGWIFRLKPRDMGDLDELLDAGGYQEVLESEA.

Residues 22–104 (TVLVGITDYA…YGEGWIFRLK (83 aa)) enclose the Lipoyl-binding domain. N6-lipoyllysine is present on K63.

This sequence belongs to the GcvH family. In terms of assembly, the glycine cleavage system is composed of four proteins: P, T, L and H. Monomer. The cofactor is (R)-lipoate.

Functionally, the glycine cleavage system catalyzes the degradation of glycine. The H protein shuttles the methylamine group of glycine from the P protein to the T protein. This chain is Glycine cleavage system H protein, found in Thermus thermophilus (strain ATCC 27634 / DSM 579 / HB8).